We begin with the raw amino-acid sequence, 379 residues long: ATPase ASNA1 homolog (379 aa).

The segment at 1 to 20 (MSEDESNSVSCSLSLESDGY) is disordered. The span at 7-18 (NSVSCSLSLESD) shows a compositional bias: low complexity. 46-53 (KGGVGKTT) contacts ATP. The active site involves Asp75. Positions 246 and 273 each coordinate ATP.

Belongs to the arsA ATPase family. In terms of assembly, homodimer.

The protein resides in the cytoplasm. Its subcellular location is the endoplasmic reticulum. Its function is as follows. ATPase required for the post-translational delivery of tail-anchored (TA) proteins to the endoplasmic reticulum. Recognizes and selectively binds the transmembrane domain of TA proteins in the cytosol. This complex then targets to the endoplasmic reticulum by membrane-bound receptors, where the tail-anchored protein is released for insertion. This process is regulated by ATP binding and hydrolysis. ATP binding drives the homodimer towards the closed dimer state, facilitating recognition of newly synthesized TA membrane proteins. ATP hydrolysis is required for insertion. Subsequently, the homodimer reverts towards the open dimer state, lowering its affinity for the membrane-bound receptor, and returning it to the cytosol to initiate a new round of targeting. The protein is ATPase ASNA1 homolog of Plasmodium falciparum (isolate 3D7).